Consider the following 171-residue polypeptide: Peptide methionine sulfoxide reductase MsrA (171 aa).

Cysteine 13 is a catalytic residue.

This sequence belongs to the MsrA Met sulfoxide reductase family.

The catalysed reaction is L-methionyl-[protein] + [thioredoxin]-disulfide + H2O = L-methionyl-(S)-S-oxide-[protein] + [thioredoxin]-dithiol. It catalyses the reaction [thioredoxin]-disulfide + L-methionine + H2O = L-methionine (S)-S-oxide + [thioredoxin]-dithiol. Functionally, has an important function as a repair enzyme for proteins that have been inactivated by oxidation. Catalyzes the reversible oxidation-reduction of methionine sulfoxide in proteins to methionine. The polypeptide is Peptide methionine sulfoxide reductase MsrA (Mycobacterium ulcerans (strain Agy99)).